A 205-amino-acid chain; its full sequence is Beta-crystallin B2 (205 aa).

Ala-2 carries the post-translational modification N-acetylalanine. Residues 2-16 (ASDHQTQAGKPQPLN) are N-terminal arm. 2 consecutive Beta/gamma crystallin 'Greek key' domains span residues 17–56 (PKII…LVQA) and 57–101 (GPWV…RPIK). The segment at 102 to 106 (VDSQE) is connecting peptide. 2 Beta/gamma crystallin 'Greek key' domains span residues 107 to 148 (HKII…RVQS) and 149 to 191 (GTWV…RRIR). Positions 193–205 (MQWHQRGAFHPSS) are C-terminal arm.

Belongs to the beta/gamma-crystallin family. In terms of assembly, homo/heterodimer, or complexes of higher-order. The structure of beta-crystallin oligomers seems to be stabilized through interactions between the N-terminal arms.

In terms of biological role, crystallins are the dominant structural components of the vertebrate eye lens. This Mesocricetus auratus (Golden hamster) protein is Beta-crystallin B2 (CRYBB2).